We begin with the raw amino-acid sequence, 150 residues long: 3-hydroxyacyl-[acyl-carrier-protein] dehydratase FabZ (150 aa).

His47 is a catalytic residue.

This sequence belongs to the thioester dehydratase family. FabZ subfamily.

The protein resides in the cytoplasm. It catalyses the reaction a (3R)-hydroxyacyl-[ACP] = a (2E)-enoyl-[ACP] + H2O. Functionally, involved in unsaturated fatty acids biosynthesis. Catalyzes the dehydration of short chain beta-hydroxyacyl-ACPs and long chain saturated and unsaturated beta-hydroxyacyl-ACPs. This chain is 3-hydroxyacyl-[acyl-carrier-protein] dehydratase FabZ, found in Verminephrobacter eiseniae (strain EF01-2).